Here is a 75-residue protein sequence, read N- to C-terminus: Mitochondrial import receptor subunit TOM7-1 (75 aa).

Met1 is subject to N-acetylmethionine. Residues 1-28 are disordered; that stretch reads MESTISLKVNKGKGKGSKGASSSDDKSK. At 1-46 the chain is on the cytoplasmic side; the sequence is MESTISLKVNKGKGKGSKGASSSDDKSKFDVVKEWTNWSLKKAKVV. A helical membrane pass occupies residues 47 to 64; it reads THYGFIPLVIFVGMNSDP. Topologically, residues 65–75 are mitochondrial intermembrane; the sequence is KPHLFQLLSPV.

It belongs to the Tom7 family. In terms of assembly, forms part of the preprotein translocase complex of the outer mitochondrial membrane (TOM complex) which consists of at least 6 different proteins (TOM5, TOM6, TOM7, TOM20, TOM22/TOM9 and TOM40). In terms of tissue distribution, expressed in roots, flowers, young cotyledons and leaves.

The protein resides in the mitochondrion outer membrane. Functionally, seems to act as a modulator of the dynamics of the mitochondrial protein transport machinery. Seems to promote the dissociation of subunits of the outer membrane translocase. The chain is Mitochondrial import receptor subunit TOM7-1 (TOM7-1) from Arabidopsis thaliana (Mouse-ear cress).